Reading from the N-terminus, the 357-residue chain is Ion-translocating oxidoreductase complex subunit D (357 aa).

Transmembrane regions (helical) follow at residues 35–55 (VWLY…TVLV), 88–108 (LPPW…VVLG), and 119–139 (LFNP…VEMT). Thr-176 is modified (FMN phosphoryl threonine). 5 helical membrane passes run 209–229 (APGS…VYLI), 233–253 (VIAW…ATVF), 261–281 (YADA…FFIA), 295–315 (AVFA…GGYP), and 316–336 (EATA…DHWI).

Belongs to the NqrB/RnfD family. The complex is composed of six subunits: RnfA, RnfB, RnfC, RnfD, RnfE and RnfG. It depends on FMN as a cofactor.

It is found in the cell inner membrane. Its function is as follows. Part of a membrane-bound complex that couples electron transfer with translocation of ions across the membrane. This Halorhodospira halophila (strain DSM 244 / SL1) (Ectothiorhodospira halophila (strain DSM 244 / SL1)) protein is Ion-translocating oxidoreductase complex subunit D.